The primary structure comprises 308 residues: MNWEKFVEEKVKEIRETVGDSKAIIALSGGVDSSTAAVLAYKAIGDKLHAVFVNTGFLRKGEPEFVVKTFRDEFGMNLHYVDAQDRFFSALKGVTDPEEKRKIIGRVFIEVFEEVAREIGAEYLIQGTIAPDWIESQGKIKSHHNVGGLPERLNLKLIEPLRDLYKDEVRELAKFLGLPEKIYNRMPFPGPGLAVRVIGEVTPEKIRIVREANAIVEEEVERAGLRPWQAFAVLLGVKTVGVQGDIRAYKETIAVRIVESLDGMTANAMNVPWEVLQRIAFRITSEIPEVGRVLYDITNKPPATIEFE.

Residues M1–R185 enclose the GMPS ATP-PPase domain. An ATP-binding site is contributed by S28–S34.

Heterodimer composed of a glutamine amidotransferase subunit (A) and a GMP-binding subunit (B).

The enzyme catalyses XMP + L-glutamine + ATP + H2O = GMP + L-glutamate + AMP + diphosphate + 2 H(+). The protein operates within purine metabolism; GMP biosynthesis; GMP from XMP (L-Gln route): step 1/1. In terms of biological role, catalyzes the synthesis of GMP from XMP. The polypeptide is GMP synthase [glutamine-hydrolyzing] subunit B (guaAB) (Pyrococcus abyssi (strain GE5 / Orsay)).